A 72-amino-acid polypeptide reads, in one-letter code: uncharacterized protein (72 aa).

The protein belongs to the ycf76 family.

The protein localises to the plastid. It localises to the chloroplast. This is an uncharacterized protein from Oryza nivara (Indian wild rice).